We begin with the raw amino-acid sequence, 707 residues long: MSVVGVDFGALNTVIAVARNRGVDVITNEVSNRATPSLVGFGPKSRYIGEPAKTQEISNLKNTVGCLKRLAGRTLDDPDVAIEQQFISATLVDVNGEVGAEVTYLGEKRKFSATELIAMFMSKIKQTTQAEVKVAVQELVLSVPAWFTDKQRRSILDAAEIAGLRPLRLINDTTAAALGWGITKLDLPGPEEKPRRVAFVDVGYSNYTCSIVEFKKGELSVKSTACDRHFGGRNFDKALLDHLHKEFLGKYKIDIFTNPKAVCRVLAAAEKLKKILSANQQAPLNIESLMNDIDVRAMITRQEFEAMVEPLLAKVHVPLEQALADAKLTKDDIDIIEVVGGGSRVPSVKERIQAFFGKQLSFTMNQDEAIARGCAFSCAILSPVFKVRDFQVQDIINYPIEFTWEKDADIPDEDTSLVVFNKGNVLPSTKILTFYRKQPFDLEARYTNPEELPGKTSPFIGRFSIKGVHATEGPEDFMICKLKARINIHGILNVESAYYVEDQEVEEEVKDENGDVVMEGDKPKTRKVKKQVRKGELPVVSATPSLDPAAKNAAIEREQAMIMEDKLVADTEEKKNELETYIYDLRNKLDDQYADLASEEEKEKIRAKLMEVEDWLYDEGDDATKAVYVAKIEEIRALAGPVVQRYFDKVEAERQALQEKLEAEKAAKKAEEEARKAKEAAEKAAQEGAKDDEMTDADAPKPVVEEA.

A compositionally biased stretch (basic and acidic residues) spans 662-692; that stretch reads EAEKAAKKAEEEARKAKEAAEKAAQEGAKDD. The interval 662 to 707 is disordered; sequence EAEKAAKKAEEEARKAKEAAEKAAQEGAKDDEMTDADAPKPVVEEA.

This sequence belongs to the heat shock protein 70 family. As to quaternary structure, binds hsp30 independent of temperature or substrate. Post-translationally, the N-terminus is blocked.

Its subcellular location is the cytoplasm. In Neurospora crassa (strain ATCC 24698 / 74-OR23-1A / CBS 708.71 / DSM 1257 / FGSC 987), this protein is Heat shock protein hsp88 (hsp88).